A 212-amino-acid chain; its full sequence is Tetraspanin-31-A (212 aa).

The Cytoplasmic segment spans residues 1–12 (MVCGGFTCSKNA). The helical transmembrane segment at 13–33 (LCALNVVYMLVGLLLIGVAAW) threads the bilayer. Residues 34–44 (GKGFGIVSSIH) are Extracellular-facing. The chain crosses the membrane as a helical span at residues 45–65 (IIGGVIAIGVFLLLIAIIGLI). Topologically, residues 66–72 (GAVSHHQ) are cytoplasmic. A helical membrane pass occupies residues 73 to 93 (VMLFIYMVVLILVFIFQFIVS). Topologically, residues 94–175 (CSCLAMNRSQ…MLNHADEALK (82 aa)) are extracellular. N-linked (GlcNAc...) asparagine glycans are attached at residues N100, N109, N117, and N134. Residues 176-196 (ILGGVGLFFSFTEILGVWLAF) form a helical membrane-spanning segment. The Cytoplasmic portion of the chain corresponds to 197-212 (RFRNQKDPRANPSAFL).

The protein belongs to the tetraspanin (TM4SF) family.

The protein localises to the membrane. The sequence is that of Tetraspanin-31-A (tspan31-a) from Xenopus laevis (African clawed frog).